A 209-amino-acid chain; its full sequence is Octanoyltransferase (209 aa).

A BPL/LPL catalytic domain is found at 29 to 209; sequence EHTPDELWVV…CHQLQPEIDS (181 aa). Substrate is bound by residues 71–78, 138–140, and 151–153; these read RGGQVTYH, SLG, and GLA. The Acyl-thioester intermediate role is filled by Cys-169.

This sequence belongs to the LipB family.

It localises to the cytoplasm. It catalyses the reaction octanoyl-[ACP] + L-lysyl-[protein] = N(6)-octanoyl-L-lysyl-[protein] + holo-[ACP] + H(+). It functions in the pathway protein modification; protein lipoylation via endogenous pathway; protein N(6)-(lipoyl)lysine from octanoyl-[acyl-carrier-protein]: step 1/2. Functionally, catalyzes the transfer of endogenously produced octanoic acid from octanoyl-acyl-carrier-protein onto the lipoyl domains of lipoate-dependent enzymes. Lipoyl-ACP can also act as a substrate although octanoyl-ACP is likely to be the physiological substrate. The chain is Octanoyltransferase from Hydrogenovibrio crunogenus (strain DSM 25203 / XCL-2) (Thiomicrospira crunogena).